The following is a 134-amino-acid chain: uncharacterized protein (134 aa).

To E.coli YbcV and YdfO.

This is an uncharacterized protein from Escherichia coli (strain K12).